Reading from the N-terminus, the 221-residue chain is MNNLRQEFIKFSVDTGVLRFGEFVTKAGRTSPYFFNAGLFNQGGTLARLADFYAQTLIDSGVEFDMLFGPAYKGITLASATAVALANKGRDVPFAFNRKEAKDHGEGGTMVGAKLQGRVVIIDDVISAGTSVRESVDMIRAAGATPCAVLIALDRMERSGADDALSAYSAVQEVSNTYGMPVISIGNLSDLFEYLSNAGADSEQAQYRDAVSAYRKRYGVT.

Lys-26 is a binding site for 5-phospho-alpha-D-ribose 1-diphosphate. Residue 34–35 (FF) participates in orotate binding. Residues 72 to 73 (YK), Arg-98, Lys-99, Lys-102, His-104, and 123 to 131 (DDVISAGTS) contribute to the 5-phospho-alpha-D-ribose 1-diphosphate site. Residues Ser-127 and Arg-155 each contribute to the orotate site.

The protein belongs to the purine/pyrimidine phosphoribosyltransferase family. PyrE subfamily. As to quaternary structure, homodimer. The cofactor is Mg(2+).

It catalyses the reaction orotidine 5'-phosphate + diphosphate = orotate + 5-phospho-alpha-D-ribose 1-diphosphate. The protein operates within pyrimidine metabolism; UMP biosynthesis via de novo pathway; UMP from orotate: step 1/2. In terms of biological role, catalyzes the transfer of a ribosyl phosphate group from 5-phosphoribose 1-diphosphate to orotate, leading to the formation of orotidine monophosphate (OMP). This is Orotate phosphoribosyltransferase from Herminiimonas arsenicoxydans.